The sequence spans 269 residues: Ribonuclease HII (269 aa).

The region spanning 83–269 (YLIAGVDEVG…HRMSFLTNIL (187 aa)) is the RNase H type-2 domain. A divalent metal cation contacts are provided by Asp89, Glu90, and Asp185.

This sequence belongs to the RNase HII family. The cofactor is Mn(2+). Mg(2+) is required as a cofactor.

It is found in the cytoplasm. It carries out the reaction Endonucleolytic cleavage to 5'-phosphomonoester.. Its function is as follows. Endonuclease that specifically degrades the RNA of RNA-DNA hybrids. The chain is Ribonuclease HII from Clostridium botulinum (strain ATCC 19397 / Type A).